The sequence spans 361 residues: Single-stranded DNA-binding protein 3 (361 aa).

Met1 carries the post-translational modification N-acetylmethionine. The LisH domain occupies Ala16–Lys48. Asymmetric dimethylarginine occurs at positions 128, 134, and 138. Disordered stretches follow at residues Gly140–His166 and Pro184–Val361. A compositionally biased stretch (low complexity) spans Pro223–Gly241. The span at Gly245–Pro255 shows a compositional bias: pro residues. Positions Ala258–Thr269 are enriched in polar residues. Over residues Gly288–Gly298 the composition is skewed to gly residues. Low complexity predominate over residues Asn319 to Pro330. 3 positions are modified to phosphoserine: Ser320, Ser325, and Ser328. Thr333 carries the phosphothreonine modification. The segment covering His346–Val361 has biased composition (polar residues). Residues Ser354 and Ser360 each carry the phosphoserine modification.

It is found in the nucleus. May be involved in transcription regulation of the alpha 2(I) collagen gene where it binds to the single-stranded polypyrimidine sequences in the promoter region. This Rattus norvegicus (Rat) protein is Single-stranded DNA-binding protein 3 (Ssbp3).